Reading from the N-terminus, the 504-residue chain is Maturase K (504 aa).

Belongs to the intron maturase 2 family. MatK subfamily.

The protein resides in the plastid. It localises to the chloroplast. Functionally, usually encoded in the trnK tRNA gene intron. Probably assists in splicing its own and other chloroplast group II introns. This Guizotia abyssinica (Niger) protein is Maturase K.